Reading from the N-terminus, the 143-residue chain is uncharacterized protein (143 aa).

The next 2 membrane-spanning stretches (helical) occupy residues 16-36 and 48-68; these read LIFA…IFVW and ICYI…FIYV. An N-linked (GlcNAc...) asparagine; by host glycan is attached at Asn-71.

It localises to the membrane. This is an uncharacterized protein from Acanthamoeba polyphaga (Amoeba).